The primary structure comprises 339 residues: MSDIFSLSSYDYKLPQDLIATAPTMPKEEARLLVYDRQKDSVFHLKFKNLSEILPECAIIFNDTKVIKARIYGRKDSGAEIQMLLNQPLQNSLFSCYIRGKVKVGTKLKFDLGVEAEVLELKDDSSRIVKFKKNEQILNTSEIYNILSHIGHVPLPPYIKREDTPDDEIWYQSIFAKNEGAVAAPTASLHFNDQMLDDLNKTHDISYITLHVGAGTFKGVEHCDIREHKMHSEFYCISKKAKNIIDSDIKLLGVGTTVTRCIEYYYRTKQPKGFCDLFLHPDNKPLRQDFLLTNFHLPKSTLIMLVASFIGLEKTMEIYKQAVENRYKFYSYGDGMLII.

It belongs to the QueA family. In terms of assembly, monomer.

The protein resides in the cytoplasm. It catalyses the reaction 7-aminomethyl-7-carbaguanosine(34) in tRNA + S-adenosyl-L-methionine = epoxyqueuosine(34) in tRNA + adenine + L-methionine + 2 H(+). It participates in tRNA modification; tRNA-queuosine biosynthesis. Functionally, transfers and isomerizes the ribose moiety from AdoMet to the 7-aminomethyl group of 7-deazaguanine (preQ1-tRNA) to give epoxyqueuosine (oQ-tRNA). The chain is S-adenosylmethionine:tRNA ribosyltransferase-isomerase from Campylobacter fetus subsp. fetus (strain 82-40).